The chain runs to 446 residues: Serum factor response D (446 aa).

Residues 1 to 61 enclose the MADS-box domain; sequence MGRKKIKIQR…PNAKEKYFQY (61 aa). Disordered stretches follow at residues 95 to 195, 210 to 296, and 319 to 432; these read KKEK…FNSS, TQEN…CQQV, and CSSP…SNLN. Residues 112–121 show a composition bias toward basic and acidic residues; sequence SHSEEEDHKS. Positions 133–142 are enriched in basic residues; the sequence is HHNHHHHHHQ. Low complexity-rich tracts occupy residues 143–195 and 216–282; these read YNNN…FNSS and HYNN…NNNN. A compositionally biased stretch (polar residues) spans 322-355; that stretch reads PEDTSPMTSPRTPPFSSTNTNTLQTSPNSQQKSK. Over residues 365 to 432 the composition is skewed to low complexity; the sequence is NNNQNNNNQN…SPTSSSSNLN (68 aa).

The protein resides in the nucleus. This chain is Serum factor response D (srfD), found in Dictyostelium discoideum (Social amoeba).